The chain runs to 340 residues: Heat-inducible transcription repressor HrcA (340 aa).

This sequence belongs to the HrcA family.

Functionally, negative regulator of class I heat shock genes (grpE-dnaK-dnaJ and groELS operons). Prevents heat-shock induction of these operons. This is Heat-inducible transcription repressor HrcA from Burkholderia cenocepacia (strain HI2424).